We begin with the raw amino-acid sequence, 362 residues long: Putative G-protein coupled receptor B0244.5 (362 aa).

The Extracellular portion of the chain corresponds to 1–47 (MQNIFENCSYHSKYEPYFLNCTNTTNQCVLIQDVGIIQAIDFWANLC). 3 N-linked (GlcNAc...) asparagine glycosylation sites follow: Asn-7, Asn-20, and Asn-23. A helical transmembrane segment spans residues 48 to 68 (IPFTLFVIAFILNGYYLSILI). Residues 69 to 81 (PEFRKMNDTTKKQ) are Cytoplasmic-facing. A helical transmembrane segment spans residues 82–102 (YIFVVSRGISSLSASSIMMVL). Residues 103-125 (RLLKMLSTSFTVYFLFFLIDDLS) lie on the Extracellular side of the membrane. A helical membrane pass occupies residues 126–145 (FYSLLGSYVGSTLLLYLATV). Residues 146–161 (RPIFYSIQISVRIVYK) lie on the Cytoplasmic side of the membrane. The helical transmembrane segment at 162–182 (FALVNVLLAVVLAVTTAIFQA) threads the bilayer. Residues 183 to 204 (AEVSDGFFHCDVQHCQPIINIA) are Extracellular-facing. The chain crosses the membrane as a helical span at residues 205-225 (MFVIIATSFLIPIITLTFVLV). Over 226-255 (TLCFQKSRTQSIGNFTVDNSVYKSARTRLA) the chain is Cytoplasmic. Residues 256-276 (WTLFTFTLISLTEMIPSSFLV) form a helical membrane-spanning segment. Residues 277-295 (NLRVEDTITICVNFYQADH) are Extracellular-facing. Residues 296 to 316 (LFIPAIMNSFQTLAWGIALIV) form a helical membrane-spanning segment. Topologically, residues 317-362 (DPLCALLFDPRIRKVWVEHVSRLSIIIGRSFEACCHSNLNKEIQDK) are cytoplasmic.

Belongs to the G-protein coupled receptor 1 family. B0244 subfamily.

The protein resides in the cell membrane. This chain is Putative G-protein coupled receptor B0244.5, found in Caenorhabditis elegans.